The primary structure comprises 199 residues: FMN-dependent NADH:quinone oxidoreductase (199 aa).

17–19 (SYS) provides a ligand contact to FMN.

It belongs to the azoreductase type 1 family. Homodimer. The cofactor is FMN.

It catalyses the reaction 2 a quinone + NADH + H(+) = 2 a 1,4-benzosemiquinone + NAD(+). The enzyme catalyses N,N-dimethyl-1,4-phenylenediamine + anthranilate + 2 NAD(+) = 2-(4-dimethylaminophenyl)diazenylbenzoate + 2 NADH + 2 H(+). Quinone reductase that provides resistance to thiol-specific stress caused by electrophilic quinones. Its function is as follows. Also exhibits azoreductase activity. Catalyzes the reductive cleavage of the azo bond in aromatic azo compounds to the corresponding amines. In Mycoplasmopsis synoviae (strain 53) (Mycoplasma synoviae), this protein is FMN-dependent NADH:quinone oxidoreductase.